Consider the following 62-residue polypeptide: Potassium channel toxin kappa-KTx 1.4 (62 aa).

Residues 1–26 (MKSCLINVSLLILLLLPILGYASVNA) form the signal peptide. Positions 27-38 (ESIDGENDFEEE) are excised as a propeptide. 2 disulfides stabilise this stretch: Cys43-Cys61 and Cys47-Cys57.

This sequence belongs to the short scorpion toxin superfamily. Potassium channel inhibitor kappa-KTx family. Kappa-KTx 1 subfamily. Expressed by the venom gland.

The protein resides in the secreted. Its function is as follows. Shows structural homology with WaTx suggesting that it acts as a cell-penetrating peptide (CPP) with defensive purpose that induces pain by specifically activating mammalian sensory neuron TRPA1 channels. Has no effect on the voltage-gated potassium channels tested. This chain is Potassium channel toxin kappa-KTx 1.4, found in Heterometrus petersii (Asian forest scorpion).